Consider the following 163-residue polypeptide: Ribonuclease P protein component (163 aa).

Positions 1–68 (MDEKDVATQP…GGKLLSLKGD (68 aa)) are disordered. Over residues 8–19 (TQPQETGQNPRL) the composition is skewed to polar residues.

This sequence belongs to the RnpA family. As to quaternary structure, consists of a catalytic RNA component (M1 or rnpB) and a protein subunit.

The catalysed reaction is Endonucleolytic cleavage of RNA, removing 5'-extranucleotides from tRNA precursor.. In terms of biological role, RNaseP catalyzes the removal of the 5'-leader sequence from pre-tRNA to produce the mature 5'-terminus. It can also cleave other RNA substrates such as 4.5S RNA. The protein component plays an auxiliary but essential role in vivo by binding to the 5'-leader sequence and broadening the substrate specificity of the ribozyme. The chain is Ribonuclease P protein component from Thermus thermophilus (strain ATCC BAA-163 / DSM 7039 / HB27).